Here is a 305-residue protein sequence, read N- to C-terminus: tRNA uridine(34) hydroxylase (305 aa).

Residues 136-230 (ADENTVVVDK…YLEEVPREQS (95 aa)) enclose the Rhodanese domain. Residue cysteine 190 is the Cysteine persulfide intermediate of the active site.

It belongs to the TrhO family.

It catalyses the reaction uridine(34) in tRNA + AH2 + O2 = 5-hydroxyuridine(34) in tRNA + A + H2O. Catalyzes oxygen-dependent 5-hydroxyuridine (ho5U) modification at position 34 in tRNAs. This Brucella melitensis biotype 1 (strain ATCC 23456 / CCUG 17765 / NCTC 10094 / 16M) protein is tRNA uridine(34) hydroxylase.